We begin with the raw amino-acid sequence, 206 residues long: Cytidylate kinase (206 aa).

ATP is bound at residue 7–15 (GVAASGKSS).

The protein belongs to the cytidylate kinase family. Type 1 subfamily.

Its subcellular location is the cytoplasm. The catalysed reaction is CMP + ATP = CDP + ADP. It carries out the reaction dCMP + ATP = dCDP + ADP. The polypeptide is Cytidylate kinase (Deinococcus radiodurans (strain ATCC 13939 / DSM 20539 / JCM 16871 / CCUG 27074 / LMG 4051 / NBRC 15346 / NCIMB 9279 / VKM B-1422 / R1)).